The following is a 462-amino-acid chain: Cysteine--tRNA ligase (462 aa).

C30 is a binding site for Zn(2+). A 'HIGH' region motif is present at residues M32 to H42. Zn(2+) is bound by residues C214, H239, and E243. The 'KMSKS' region motif lies at K271 to S275. Position 274 (K274) interacts with ATP.

It belongs to the class-I aminoacyl-tRNA synthetase family. Monomer. Zn(2+) is required as a cofactor.

Its subcellular location is the cytoplasm. It catalyses the reaction tRNA(Cys) + L-cysteine + ATP = L-cysteinyl-tRNA(Cys) + AMP + diphosphate. This chain is Cysteine--tRNA ligase, found in Herminiimonas arsenicoxydans.